Reading from the N-terminus, the 173-residue chain is Photosystem I assembly protein Ycf3 (173 aa).

TPR repeat units follow at residues 35–68, 72–105, and 120–153; these read AYVYYRDGLSAQNDGDYAEALENYEESLKLEENP, GETLKNMAIIYMSNGEEDRALATYQKALDENPKQ, and GRTAEEEGRRDDADGWFDQAAEVWTQAVRLNPGG.

This sequence belongs to the Ycf3 family.

The protein localises to the cellular thylakoid membrane. In terms of biological role, essential for the assembly of the photosystem I (PSI) complex. May act as a chaperone-like factor to guide the assembly of the PSI subunits. The polypeptide is Photosystem I assembly protein Ycf3 (Synechococcus sp. (strain WH7803)).